The following is a 185-amino-acid chain: Large ribosomal subunit protein uL22 (185 aa).

The protein belongs to the universal ribosomal protein uL22 family.

This Debaryomyces hansenii (strain ATCC 36239 / CBS 767 / BCRC 21394 / JCM 1990 / NBRC 0083 / IGC 2968) (Yeast) protein is Large ribosomal subunit protein uL22 (RPL17).